The chain runs to 809 residues: Ecotropic viral integration site 5 protein (809 aa).

Positions 1–483 are interaction with alpha-tubulin, gamma-tubulin, BIRC5 and FBXO5; that stretch reads MVTTKMTAAF…EAESQCALKE (483 aa). Disordered stretches follow at residues 49–80 and 99–123; these read VASP…KLSP and DSKS…SSSA. A compositionally biased stretch (low complexity) spans 51-78; that stretch reads SPSASLHTTSSSTTLSTPTQSPSSPSKL. Phosphoserine occurs at positions 102 and 113. Residues 103–123 are compositionally biased toward low complexity; the sequence is LRSVNGSRRNSGSSLVSSSSA. The tract at residues 128 to 693 is dimerization; that stretch reads SHLEEDSWIL…LNRSDSNQYI (566 aa). Residues 163 to 348 enclose the Rab-GAP TBC domain; that stretch reads GIPHHFRAIV…RIFDIFMSEG (186 aa). The interval 377–809 is targeting to the centrosomes; sequence QHFQKVIPHQ…PQRESYSTTV (433 aa). The stretch at 406–717 forms a coiled coil; sequence KKMKKLEKEY…RCLKGQRDFS (312 aa). Residues 487 to 809 are interaction with AURKB and INCENP; it reads KVLDIEKKNN…PQRESYSTTV (323 aa). 4 positions are modified to phosphoserine: S497, S689, S776, and S778. The tract at residues 760 to 809 is disordered; the sequence is HRKSGPMSLNPALADGSESEAEDGMLGPQESDPEAPQKQPPQRESYSTTV. The segment covering 799-809 has biased composition (polar residues); that stretch reads PPQRESYSTTV.

In terms of assembly, dimeric and monomeric. Interacts with alpha- and gamma-tubulin. Interacts with FBXO5. Interacts with the chromosome passenger complex (CPC) which is at least composed of AURKB/aurora-B, BIRC5/survivin, CDCA8/borealin and INCENP. Probably phosphorylated by PLK1; may be required for degradation during mitosis. In terms of processing, ubiquitinated. Degradation during prophase is ubiquitin-dependent. As to expression, widely expressed.

It localises to the nucleus. Its subcellular location is the cytoplasm. It is found in the cytoskeleton. The protein localises to the microtubule organizing center. The protein resides in the centrosome. It localises to the spindle. Functionally, functions as a regulator of cell cycle progression by stabilizing the FBXO5 protein and promoting cyclin-A accumulation during interphase. May play a role in cytokinesis. The sequence is that of Ecotropic viral integration site 5 protein (Evi5) from Mus musculus (Mouse).